The primary structure comprises 173 residues: Disulfide bond formation protein B (173 aa).

Residues 1–16 (MRILSSLKTFSQSRLS) lie on the Cytoplasmic side of the membrane. A helical membrane pass occupies residues 17–33 (WLLLLAFVVFFTLCAMY). Residues 34–51 (FQHVMLLAPCVMCIYERI) are Periplasmic-facing. An intrachain disulfide couples cysteine 43 to cysteine 46. Residues 52–67 (AMLGIGVAALIGAIAP) traverse the membrane as a helical segment. Residues 68-74 (QNPVVRW) lie on the Cytoplasmic side of the membrane. The helical transmembrane segment at 75–92 (LGFAAWGASSYKGLMLAI) threads the bilayer. Residues 93 to 147 (EHVNYQFNPSPFATCDLFVTFPAWAPLNQWAPNLFEAYGDCSKVVWQFLTLSMPQ) lie on the Periplasmic side of the membrane. An intrachain disulfide couples cysteine 107 to cysteine 133. The helical transmembrane segment at 148 to 166 (WLVVIFAANLLALAIFVVA) threads the bilayer. Residues 167-173 (QLAKTSR) lie on the Cytoplasmic side of the membrane.

This sequence belongs to the DsbB family.

The protein resides in the cell inner membrane. Functionally, required for disulfide bond formation in some periplasmic proteins. Acts by oxidizing the DsbA protein. This chain is Disulfide bond formation protein B, found in Vibrio cholerae serotype O1 (strain ATCC 39315 / El Tor Inaba N16961).